A 47-amino-acid chain; its full sequence is Small, acid-soluble spore protein K (47 aa).

Positions 1–47 are disordered; the sequence is MRNKAHGFPHRISFDGEPDRAKHASKRANGTINTKPQERMHQANPDQ. A compositionally biased stretch (basic and acidic residues) spans 12 to 22; it reads ISFDGEPDRAK.

This sequence belongs to the SspK family.

The protein resides in the spore core. The sequence is that of Small, acid-soluble spore protein K from Halalkalibacterium halodurans (strain ATCC BAA-125 / DSM 18197 / FERM 7344 / JCM 9153 / C-125) (Bacillus halodurans).